We begin with the raw amino-acid sequence, 342 residues long: Cystein proteinase inhibitor protein salarin (342 aa).

Residues 1-19 (MKSLVLLLLVAVTVSSVVS) form the signal peptide. A glycan (N-linked (GlcNAc) asparagine) is linked at Asn153. An O-linked (GlcNAc) threonine glycan is attached at Thr184.

N-glycosylated, with sialylated biantennary complex-type glycans. Post-translationally, O-glycosylated, with sialylated oligosaccharides.

The protein localises to the cytoplasm. It localises to the vacuole. Inhibits papain and ficin (cysteine proteinases) but not trypsin (a serine proteinase). This Salvelinus alpinus (Arctic char) protein is Cystein proteinase inhibitor protein salarin (salarin).